The following is a 96-amino-acid chain: Sec-independent protein translocase protein TatA (96 aa).

The helical transmembrane segment at 1–21 (MGFSSIWHWIIVLVVVLLLFG) threads the bilayer. The disordered stretch occupies residues 42–96 (GMADDEDDEAASVSAERRGIEDGKPAQTIYPPQQPQQPQQPPQQPPVHRDDAPRG). Positions 56–65 (AERRGIEDGK) are enriched in basic and acidic residues. Residues 73–86 (PQQPQQPQQPPQQP) are compositionally biased toward pro residues.

This sequence belongs to the TatA/E family. The Tat system comprises two distinct complexes: a TatABC complex, containing multiple copies of TatA, TatB and TatC subunits, and a separate TatA complex, containing only TatA subunits. Substrates initially bind to the TatABC complex, which probably triggers association of the separate TatA complex to form the active translocon.

The protein localises to the cell inner membrane. Functionally, part of the twin-arginine translocation (Tat) system that transports large folded proteins containing a characteristic twin-arginine motif in their signal peptide across membranes. TatA could form the protein-conducting channel of the Tat system. The polypeptide is Sec-independent protein translocase protein TatA (Rhodospirillum rubrum (strain ATCC 11170 / ATH 1.1.1 / DSM 467 / LMG 4362 / NCIMB 8255 / S1)).